We begin with the raw amino-acid sequence, 346 residues long: 4-hydroxy-2-oxovalerate aldolase 2 (346 aa).

Residues 8 to 258 (VTLVDTTLRD…HTGVELFPLI (251 aa)) enclose the Pyruvate carboxyltransferase domain. Substrate-binding positions include 16-17 (RD), S170, and H197. D17 is a Mn(2+) binding site. Mn(2+)-binding residues include H197 and H199. Position 288 (Y288) interacts with substrate.

It belongs to the 4-hydroxy-2-oxovalerate aldolase family.

It carries out the reaction (S)-4-hydroxy-2-oxopentanoate = acetaldehyde + pyruvate. The sequence is that of 4-hydroxy-2-oxovalerate aldolase 2 from Nocardia farcinica (strain IFM 10152).